The chain runs to 75 residues: uncharacterized protein (75 aa).

The next 2 membrane-spanning stretches (helical) occupy residues 5-25 and 42-62; these read VIICLLFTYYVIWSLLPIFEI and VAIFLPIFLLLIGFTLTGSVL.

The protein resides in the membrane. This is an uncharacterized protein from Saccharomyces cerevisiae (strain ATCC 204508 / S288c) (Baker's yeast).